The primary structure comprises 282 residues: Stress response regulator protein 1 (282 aa).

Composition is skewed to low complexity over residues 12–30 and 45–58; these read NLSR…HSST and NSQS…SNNN. 3 disordered regions span residues 12 to 31, 43 to 84, and 112 to 139; these read NLSR…SSTV, DINS…DDED, and LTPF…TTVV. Over residues 66–77 the composition is skewed to polar residues; sequence SDYNSYTHNQYY. Residues 125–139 show a composition bias toward low complexity; that stretch reads SIISSKSSNKSTTVV. The Response regulatory domain maps to 155-273; that stretch reads SFLIVDDNII…LDFMANSIDD (119 aa). At D206 the chain carries 4-aspartylphosphate.

Its function is as follows. Required for stress adaptation, morphogenesis and virulence. The sequence is that of Stress response regulator protein 1 (SRR1) from Candida albicans (strain SC5314 / ATCC MYA-2876) (Yeast).